The following is a 304-amino-acid chain: Ribonuclease Z (304 aa).

Zn(2+) contacts are provided by His64, His66, Asp68, His69, His141, Asp209, and His267. Asp68 (proton acceptor) is an active-site residue.

It belongs to the RNase Z family. As to quaternary structure, homodimer. Requires Zn(2+) as cofactor.

The catalysed reaction is Endonucleolytic cleavage of RNA, removing extra 3' nucleotides from tRNA precursor, generating 3' termini of tRNAs. A 3'-hydroxy group is left at the tRNA terminus and a 5'-phosphoryl group is left at the trailer molecule.. In terms of biological role, zinc phosphodiesterase, which displays some tRNA 3'-processing endonuclease activity. Probably involved in tRNA maturation, by removing a 3'-trailer from precursor tRNA. The chain is Ribonuclease Z from Thermoplasma volcanium (strain ATCC 51530 / DSM 4299 / JCM 9571 / NBRC 15438 / GSS1).